The primary structure comprises 526 residues: Peptide chain release factor 3 (526 aa).

A tr-type G domain is found at D9–Q277. GTP contacts are provided by residues S18–T25, D86–H90, and N140–D143.

It belongs to the TRAFAC class translation factor GTPase superfamily. Classic translation factor GTPase family. PrfC subfamily.

It is found in the cytoplasm. Functionally, increases the formation of ribosomal termination complexes and stimulates activities of RF-1 and RF-2. It binds guanine nucleotides and has strong preference for UGA stop codons. It may interact directly with the ribosome. The stimulation of RF-1 and RF-2 is significantly reduced by GTP and GDP, but not by GMP. The chain is Peptide chain release factor 3 from Shewanella woodyi (strain ATCC 51908 / MS32).